Here is a 160-residue protein sequence, read N- to C-terminus: uncharacterized protein (160 aa).

This is an uncharacterized protein from Escherichia coli O157:H7.